A 122-amino-acid polypeptide reads, in one-letter code: Large ribosomal subunit protein uL14 (122 aa).

The protein belongs to the universal ribosomal protein uL14 family. In terms of assembly, part of the 50S ribosomal subunit. Forms a cluster with proteins L3 and L19. In the 70S ribosome, L14 and L19 interact and together make contacts with the 16S rRNA in bridges B5 and B8.

Binds to 23S rRNA. Forms part of two intersubunit bridges in the 70S ribosome. The sequence is that of Large ribosomal subunit protein uL14 from Wolinella succinogenes (strain ATCC 29543 / DSM 1740 / CCUG 13145 / JCM 31913 / LMG 7466 / NCTC 11488 / FDC 602W) (Vibrio succinogenes).